The sequence spans 837 residues: Protein translocase subunit SecA (837 aa).

ATP-binding positions include glutamine 83, 101–105 (GEGKT), and aspartate 494.

The protein belongs to the SecA family. As to quaternary structure, monomer and homodimer. Part of the essential Sec protein translocation apparatus which comprises SecA, SecYEG and auxiliary proteins SecDF. Other proteins may also be involved.

It is found in the cell membrane. It localises to the cytoplasm. The catalysed reaction is ATP + H2O + cellular proteinSide 1 = ADP + phosphate + cellular proteinSide 2.. In terms of biological role, part of the Sec protein translocase complex. Interacts with the SecYEG preprotein conducting channel. Has a central role in coupling the hydrolysis of ATP to the transfer of proteins into and across the cell membrane, serving as an ATP-driven molecular motor driving the stepwise translocation of polypeptide chains across the membrane. The chain is Protein translocase subunit SecA from Ureaplasma parvum serovar 3 (strain ATCC 27815 / 27 / NCTC 11736).